Consider the following 318-residue polypeptide: Taste receptor type 2 member 60 (318 aa).

Over 1 to 7 (MNGDHMV) the chain is Extracellular. Residues 8–28 (LGSSVTDKKAIILVTILLLLR) traverse the membrane as a helical segment. Residues 29-40 (LVAIAGNGFITA) lie on the Cytoplasmic side of the membrane. Residues 41 to 61 (ALGVEWVLRRMLLPCDKLLVS) traverse the membrane as a helical segment. The Extracellular segment spans residues 62-88 (LGASRFCLQSVVMGKTIYVFLHPMAFP). A helical transmembrane segment spans residues 89-109 (YNPVLQFLAFQWDFLNAATLW). The Cytoplasmic portion of the chain corresponds to 110 to 128 (SSTWLSVFYCVKIATFTHP). The chain crosses the membrane as a helical span at residues 129-149 (VFFWLKHKLSGWLPWMLFSSV). Over 150-183 (GLSSFTTILFFIGNHRMYQNYLRNHLQPWNVTGD) the chain is Extracellular. Asn179 carries an N-linked (GlcNAc...) asparagine glycan. A helical transmembrane segment spans residues 184–204 (SIRSYCEKFYLFPLKMITWTM). Over 205–234 (PTAVFFICMILLITSLGRHRKKALLTTSGF) the chain is Cytoplasmic. The helical transmembrane segment at 235–255 (REPSVQAHIKALLALLSFAML) threads the bilayer. Residues 256–264 (FISYFLSLV) are Extracellular-facing. The helical transmembrane segment at 265-285 (FSAAGIFPPLDFKFWVWESVI) threads the bilayer. Topologically, residues 286–318 (YLCAAVHPIILLFSNCRLRAVLKSRRSSRCGTP) are cytoplasmic.

The protein belongs to the G-protein coupled receptor T2R family. As to expression, expressed in subsets of taste receptor cells of the tongue and exclusively in gustducin-positive cells.

It localises to the membrane. In terms of biological role, receptor that may play a role in the perception of bitterness and is gustducin-linked. May play a role in sensing the chemical composition of the gastrointestinal content. The activity of this receptor may stimulate alpha gustducin, mediate PLC-beta-2 activation and lead to the gating of TRPM5. This is Taste receptor type 2 member 60 (TAS2R60) from Homo sapiens (Human).